The sequence spans 111 residues: ATP-dependent Clp protease adapter protein ClpS (111 aa).

This sequence belongs to the ClpS family. As to quaternary structure, binds to the N-terminal domain of the chaperone ClpA.

In terms of biological role, involved in the modulation of the specificity of the ClpAP-mediated ATP-dependent protein degradation. The chain is ATP-dependent Clp protease adapter protein ClpS from Legionella pneumophila (strain Corby).